A 270-amino-acid polypeptide reads, in one-letter code: Glutamate racemase (270 aa).

Residues 10-11 (DS) and 42-43 (YG) contribute to the substrate site. The Proton donor/acceptor role is filled by C74. 75 to 76 (NT) contacts substrate. C189 serves as the catalytic Proton donor/acceptor. A substrate-binding site is contributed by 190–191 (TH).

It belongs to the aspartate/glutamate racemases family.

It catalyses the reaction L-glutamate = D-glutamate. Its pathway is cell wall biogenesis; peptidoglycan biosynthesis. In terms of biological role, provides the (R)-glutamate required for cell wall biosynthesis. The polypeptide is Glutamate racemase (Bartonella quintana (strain Toulouse) (Rochalimaea quintana)).